We begin with the raw amino-acid sequence, 253 residues long: uncharacterized protein (253 aa).

The segment at 211 to 235 (DEPEPAQPTLTVPSAQPVSNRRGKP) is disordered. Residues 218–229 (PTLTVPSAQPVS) are compositionally biased toward polar residues.

This is an uncharacterized protein from Mycobacterium tuberculosis (strain CDC 1551 / Oshkosh).